A 302-amino-acid polypeptide reads, in one-letter code: Glutaminase (302 aa).

Residues serine 61, asparagine 111, glutamate 155, asparagine 162, tyrosine 186, tyrosine 238, and valine 256 each coordinate substrate.

This sequence belongs to the glutaminase family. As to quaternary structure, homotetramer.

It carries out the reaction L-glutamine + H2O = L-glutamate + NH4(+). The chain is Glutaminase from Pseudomonas fluorescens (strain SBW25).